We begin with the raw amino-acid sequence, 272 residues long: Dermonecrotic toxin StSicTox-betaIC1 (272 aa).

The active site involves H5. 2 residues coordinate Mg(2+): E25 and D27. H41 functions as the Nucleophile in the catalytic mechanism. Intrachain disulfides connect C45–C51 and C47–C191. D85 serves as a coordination point for Mg(2+).

Belongs to the arthropod phospholipase D family. Class II subfamily. Class IIb sub-subfamily. Mg(2+) serves as cofactor. Expressed by the venom gland.

It is found in the secreted. It catalyses the reaction an N-(acyl)-sphingosylphosphocholine = an N-(acyl)-sphingosyl-1,3-cyclic phosphate + choline. The enzyme catalyses N-hexanoyl-sphing-4-enine-1-phosphocholine = N-(hexanoyl)-sphing-4-enine-1,3-cyclic phosphate + choline. The catalysed reaction is an N-(acyl)-sphingosylphosphoethanolamine = an N-(acyl)-sphingosyl-1,3-cyclic phosphate + ethanolamine. It carries out the reaction N-dodecanoyl-heptadecasphing-4-enine-1-phosphoethanolamine = N-dodecanoyl-heptadecasphing-4-enine-1,3-cyclic phosphate + ethanolamine. It catalyses the reaction a 1-acyl-sn-glycero-3-phosphoethanolamine = a 1-acyl-sn-glycero-2,3-cyclic phosphate + ethanolamine. The enzyme catalyses 1-tetradecanoyl-sn-glycero-3-phosphoethanolamine = 1-tetradecanoyl-sn-glycero-2,3-cyclic phosphate + ethanolamine. Its function is as follows. Dermonecrotic toxins cleave the phosphodiester linkage between the phosphate and headgroup of certain phospholipids (sphingolipid and lysolipid substrates), forming an alcohol (often choline) and a cyclic phosphate. This toxin acts on lysophosphatidylethanolamine (LPE) and ceramide phosphoethanolamine (CPE) with high activity. This toxin acts on sphingomyelin (SM) with very low activity and is not active on lysophosphatidylserine (LPS), lysophosphatidylcholine (LPC) and lysophosphatidylglycerol (LPG). It acts by transphosphatidylation, releasing exclusively cyclic phosphate as second products. It is not surprising that spider toxins have affinity for ethanolamine-containing sphingolipids since they are common in insect prey. Induces dermonecrosis, hemolysis, increased vascular permeability, edema, inflammatory response, and platelet aggregation. In Sicarius terrosus (Cave spider), this protein is Dermonecrotic toxin StSicTox-betaIC1.